We begin with the raw amino-acid sequence, 1007 residues long: Inversin-A (1007 aa).

ANK repeat units lie at residues 9–39 (SLAS…VIDQ), 43–72 (LGRT…QVNH), 76–105 (SGRT…DCTH), 109–140 (RDIT…QVDA), 144–173 (RKQT…NIGI), 177–209 (EGKI…TESL), 216–246 (EGRT…NVAP), 250–279 (LFRT…SPNI), 284–313 (QGAT…VRDE), 317–346 (EGRT…ELEV), 352–381 (YGGT…QVDA), 385–414 (MKHT…KVHL), 418–447 (DGRS…NPDA), 451–480 (EGRT…DPNI), 484–513 (NGRT…FPNQ), and 519–549 (ERYT…SIAA). Positions 486-494 (RTALHWSCN) match the D-box 1 motif. The region spanning 551–580 (QDIAASKIQAVYKGHKVRRAFQERKNLLMK) is the IQ 1 domain. Composition is skewed to basic and acidic residues over residues 585–599 (RKGA…ENRQ) and 608–652 (GKQK…HQEE). Disordered stretches follow at residues 585–837 (RKGA…KEFS) and 868–893 (SAKS…SALK). Positions 684–701 (IQSSPIEHVHTNSIQTRM) are enriched in polar residues. Residues 702-712 (SPSRTSISHSS) show a composition bias toward low complexity. A compositionally biased stretch (polar residues) spans 727–745 (NPTQNNTQPRRTSRPQIES). Residues 751 to 771 (HRIEDLVQKESRRKSHREERK) show a composition bias toward basic and acidic residues. The span at 772 to 784 (GSHRQRASSHHRL) shows a compositional bias: basic residues. Polar residues predominate over residues 870–893 (KSGQRPLTETQSPEKACQGSSALK). Positions 964–972 (RKQLFQRKK) match the D-box 2 motif. Positions 971–1000 (KKHAATVIQKAWRTYCIRKSSRKTRHSHLR) constitute an IQ 2 domain.

In terms of assembly, interacts with apc2. Binds calmodulin.

The protein localises to the cytoplasm. Its subcellular location is the cytoskeleton. Required for normal renal development and establishment of left-right axis. Probably acts as a molecular switch between different Wnt signaling pathways. Inhibits the canonical Wnt pathway by targeting cytoplasmic disheveled for degradation by the ubiquitin-proteasome. This suggests that it is required in renal development to oppose the repression of terminal differentiation of tubular epithelial cells by Wnt signaling. Plays a central role in convergent extension movements in gastrulating embryos, a processus regulated by Wnt signaling. In Xenopus laevis (African clawed frog), this protein is Inversin-A (invs-a).